Reading from the N-terminus, the 81-residue chain is Large ribosomal subunit protein uL23 (81 aa).

It belongs to the universal ribosomal protein uL23 family. In terms of assembly, part of the 50S ribosomal subunit. Contacts protein L29.

Its function is as follows. Binds to 23S rRNA. One of the proteins that surrounds the polypeptide exit tunnel on the outside of the ribosome. The protein is Large ribosomal subunit protein uL23 of Pyrobaculum aerophilum (strain ATCC 51768 / DSM 7523 / JCM 9630 / CIP 104966 / NBRC 100827 / IM2).